A 126-amino-acid chain; its full sequence is Holo-[acyl-carrier-protein] synthase (126 aa).

2 residues coordinate Mg(2+): D9 and E58.

This sequence belongs to the P-Pant transferase superfamily. AcpS family. The cofactor is Mg(2+).

Its subcellular location is the cytoplasm. The enzyme catalyses apo-[ACP] + CoA = holo-[ACP] + adenosine 3',5'-bisphosphate + H(+). Its function is as follows. Transfers the 4'-phosphopantetheine moiety from coenzyme A to a Ser of acyl-carrier-protein. This is Holo-[acyl-carrier-protein] synthase from Photorhabdus laumondii subsp. laumondii (strain DSM 15139 / CIP 105565 / TT01) (Photorhabdus luminescens subsp. laumondii).